A 244-amino-acid polypeptide reads, in one-letter code: MYKPFLEFLEKELFQRFDLQSRVIPPGLEFKVSDRGRNPATIRSWCYQSQELRKIRYTYIDAGESAQIFNSVVYPSHNYDLPLLGIDFLSFGKVKNLIVLDFQPLFQDEDYQNKYIAPLKYLHNKYPDLAQNLEMKFYDANQYFSKYLLFAKTDAETVSTRVFEAFQDYLNLYWQMLADAQALHDPEDIQRIVKAQKDYDQYSADRDPASGLFSSYFGHEWAERFLHEFLFEDAVPLAVSASKR.

Belongs to the HY2 family.

The enzyme catalyses 15,16-dihydrobiliverdin + oxidized 2[4Fe-4S]-[ferredoxin] = biliverdin IXalpha + reduced 2[4Fe-4S]-[ferredoxin] + 2 H(+). Its function is as follows. Catalyzes the two-electron reduction of biliverdin IX-alpha at the C15 methine bridge. This chain is 15,16-dihydrobiliverdin:ferredoxin oxidoreductase (pebA), found in Nostoc punctiforme (strain ATCC 29133 / PCC 73102).